The sequence spans 313 residues: Protein-methionine-sulfoxide reductase catalytic subunit MsrP (313 aa).

Residues 1–44 (MARWRPDTAEREATPEALYLRRREFLALGAAGAVGLLLPRGARA) constitute a signal peptide (tat-type signal). Residues N76, 79–80 (YE), C134, T169, N217, R222, and 233–235 (GAK) each bind Mo-molybdopterin.

The protein belongs to the MsrP family. As to quaternary structure, heterodimer of a catalytic subunit (MsrP) and a heme-binding subunit (MsrQ). It depends on Mo-molybdopterin as a cofactor. In terms of processing, predicted to be exported by the Tat system. The position of the signal peptide cleavage has not been experimentally proven.

The protein localises to the periplasm. It carries out the reaction L-methionyl-[protein] + a quinone + H2O = L-methionyl-(S)-S-oxide-[protein] + a quinol. The enzyme catalyses L-methionyl-[protein] + a quinone + H2O = L-methionyl-(R)-S-oxide-[protein] + a quinol. Its function is as follows. Part of the MsrPQ system that repairs oxidized periplasmic proteins containing methionine sulfoxide residues (Met-O), using respiratory chain electrons. Thus protects these proteins from oxidative-stress damage caused by reactive species of oxygen and chlorine generated by the host defense mechanisms. MsrPQ is essential for the maintenance of envelope integrity under bleach stress, rescuing a wide series of structurally unrelated periplasmic proteins from methionine oxidation. The catalytic subunit MsrP is non-stereospecific, being able to reduce both (R-) and (S-) diastereoisomers of methionine sulfoxide. This Anaeromyxobacter dehalogenans (strain 2CP-C) protein is Protein-methionine-sulfoxide reductase catalytic subunit MsrP.